We begin with the raw amino-acid sequence, 1122 residues long: Adhesin P1 (1122 aa).

The first 30 residues, 1 to 30 (MKKLIFKLSVGITPLALIGLGSFGLAVSGA), serve as a signal peptide directing secretion. 3 disordered regions span residues 183-209 (AGDTSAEGSATPAGGGSGSSAAGGGAV), 244-273 (DYNSDQNKIPKPKTLLDSSESSESINGGRT), and 544-563 (QNSGSQQSTSTPMPNSNGNE). Over residues 195 to 208 (AGGGSGSSAAGGGA) the composition is skewed to gly residues. A compositionally biased stretch (polar residues) spans 259–273 (LDSSESSESINGGRT). A helical membrane pass occupies residues 997–1021 (VLPVAISIPIIIIALALALGLGIGI). Residues 1066 to 1122 (KTPQMLQANKKDGASSPSKPSAPAAKKPTGPTKPSAPGAKPTAPAKPKAPAPTKKIE) are disordered. The segment covering 1079-1122 (ASSPSKPSAPAAKKPTGPTKPSAPGAKPTAPAKPKAPAPTKKIE) has biased composition (low complexity).

Belongs to the adhesin P1 family.

The protein localises to the cell membrane. Its function is as follows. Could be involved in cytadherence. The sequence is that of Adhesin P1 (gapA) from Mycoplasmoides gallisepticum (Mycoplasma gallisepticum).